The sequence spans 725 residues: Mitochondrial 15S rRNA processing factor CCM1 (725 aa).

Residues 1-21 constitute a mitochondrion transit peptide; the sequence is MRLSRIGTPKVSVTRVIPVRN. PPR repeat units follow at residues 189–223, 224–259, 260–290, 296–330, 333–363, 401–435, and 601–635; these read SAVD…GISP, DRYL…GWAP, TDYT…MKLK, NKKI…SVAT, DTTA…LETE, NEKL…RFKM, and NHDI…RKTP.

The protein belongs to the CCM1 family. In terms of assembly, binds to mitochondrial small subunit 15S rRNA.

It localises to the mitochondrion. In terms of biological role, regulates mitochondrial small subunit maturation by controlling 15S rRNA 5'-end processing. Localizes to the 5' precursor of the 15S rRNA in a position that is subsequently occupied by mS47 in the mature yeast mtSSU. Uses structure and sequence-specific RNA recognition, binding to a single-stranded region of the precursor and specifically recognizing bases -6 to -1. The exchange of Ccm1 for mS47 is coupled to the irreversible removal of precursor rRNA that is accompanied by conformational changes of the mitoribosomal proteins uS5m and mS26. These conformational changes signal completion of 5'-end rRNA processing through protection of the mature 5'-end of the 15S rRNA and stabilization of mS47. The removal of the 5' precursor together with the dissociation of Ccm1 may be catalyzed by the 5'-3' exoribonuclease Pet127. Involved in the specific removal of group I introns in mitochondrial encoded transcripts. This is Mitochondrial 15S rRNA processing factor CCM1 (CCM1) from Komagataella phaffii (strain GS115 / ATCC 20864) (Yeast).